The chain runs to 197 residues: Imidazoleglycerol-phosphate dehydratase (197 aa).

The protein belongs to the imidazoleglycerol-phosphate dehydratase family.

Its subcellular location is the cytoplasm. The catalysed reaction is D-erythro-1-(imidazol-4-yl)glycerol 3-phosphate = 3-(imidazol-4-yl)-2-oxopropyl phosphate + H2O. Its pathway is amino-acid biosynthesis; L-histidine biosynthesis; L-histidine from 5-phospho-alpha-D-ribose 1-diphosphate: step 6/9. The sequence is that of Imidazoleglycerol-phosphate dehydratase from Methanocaldococcus jannaschii (strain ATCC 43067 / DSM 2661 / JAL-1 / JCM 10045 / NBRC 100440) (Methanococcus jannaschii).